The chain runs to 147 residues: Large ribosomal subunit protein bL9 (147 aa).

Belongs to the bacterial ribosomal protein bL9 family.

Binds to the 23S rRNA. The protein is Large ribosomal subunit protein bL9 of Helicobacter hepaticus (strain ATCC 51449 / 3B1).